Here is a 178-residue protein sequence, read N- to C-terminus: Probable chorismate pyruvate-lyase (178 aa).

Positions 37, 78, 114, and 165 each coordinate substrate.

Belongs to the UbiC family.

It localises to the cytoplasm. The catalysed reaction is chorismate = 4-hydroxybenzoate + pyruvate. It functions in the pathway cofactor biosynthesis; ubiquinone biosynthesis. Its function is as follows. Removes the pyruvyl group from chorismate, with concomitant aromatization of the ring, to provide 4-hydroxybenzoate (4HB) for the ubiquinone pathway. This chain is Probable chorismate pyruvate-lyase, found in Aeromonas salmonicida (strain A449).